Consider the following 110-residue polypeptide: Insulin (110 aa).

The N-terminal stretch at 1 to 24 (MALWMRLLPLLALLALWGPDPAQA) is a signal peptide. 3 disulfides stabilise this stretch: Cys-31–Cys-96, Cys-43–Cys-109, and Cys-95–Cys-100. Residues 57 to 87 (EAEDLQVGQVELGGGPGAGSLQPLALEGSLQ) constitute a propeptide, c peptide.

Belongs to the insulin family. In terms of assembly, heterodimer of a B chain and an A chain linked by two disulfide bonds.

It localises to the secreted. In terms of biological role, insulin decreases blood glucose concentration. It increases cell permeability to monosaccharides, amino acids and fatty acids. It accelerates glycolysis, the pentose phosphate cycle, and glycogen synthesis in liver. The protein is Insulin (INS) of Pongo pygmaeus (Bornean orangutan).